Reading from the N-terminus, the 744-residue chain is NAD(P)H-quinone oxidoreductase subunit 5, chloroplastic (744 aa).

Helical transmembrane passes span 9–29, 40–60, 89–109, 125–145, 147–167, 185–205, 219–239, 258–278, 290–312, 327–347, 354–374, 396–416, 425–445, 549–569, 608–628, and 724–744; these read WIIP…LLLF, WAFQ…NLSI, IDPL…MVLI, FAYM…SNLI, IYIF…FWFT, GDFG…SFEF, NEVN…GAIA, TPIS…FLVA, IMNF…ALAQ, LGYM…FHLI, ALLF…VGYC, TSFL…CFWS, WLYS…TAFY, LFPI…GIPF, VFSV…YKPV, and YLFF…FLNF.

This sequence belongs to the complex I subunit 5 family. As to quaternary structure, NDH is composed of at least 16 different subunits, 5 of which are encoded in the nucleus.

The protein localises to the plastid. It is found in the chloroplast thylakoid membrane. The enzyme catalyses a plastoquinone + NADH + (n+1) H(+)(in) = a plastoquinol + NAD(+) + n H(+)(out). The catalysed reaction is a plastoquinone + NADPH + (n+1) H(+)(in) = a plastoquinol + NADP(+) + n H(+)(out). In terms of biological role, NDH shuttles electrons from NAD(P)H:plastoquinone, via FMN and iron-sulfur (Fe-S) centers, to quinones in the photosynthetic chain and possibly in a chloroplast respiratory chain. The immediate electron acceptor for the enzyme in this species is believed to be plastoquinone. Couples the redox reaction to proton translocation, and thus conserves the redox energy in a proton gradient. The polypeptide is NAD(P)H-quinone oxidoreductase subunit 5, chloroplastic (ndhF) (Adenocaulon himalaicum (Trailplant)).